The primary structure comprises 417 residues: MLEQMGIAAKQASYKLAQLSSREKNRVLEKIADELEAQSEIILNANAQDVADARANGLGEAMLDRLALTPARLKGIADDVRQVCNLADPVGQVIDGSVLDSGLRLERRRVPLGVIGVIYEARPNVTVDVASLCLKTGNAVILRGGKETCRTNAATVAVIQDALKSCGLPAGAVQAIDNPDRALVSEMLRMDKYIDMLIPRGGAGLHKLCREQSTIPVITGGIGVCHIYVDESVEIAEALKVIVNAKTQRPSTCNTVETLLVNKNIADSFLPALSKQMAESGVTLHADAAALAQLQAGPAKVVAVKAEEYDDEFLSLDLNVKIVSDLDDAIAHIREHGTQHSDAILTRDMRNAQRFVNEVDSSAVYVNASTRFTDGGQFGLGAEVAVSTQKLHARGPMGLEALTTYKWIGIGDYTIRA.

The protein belongs to the gamma-glutamyl phosphate reductase family.

The protein localises to the cytoplasm. The enzyme catalyses L-glutamate 5-semialdehyde + phosphate + NADP(+) = L-glutamyl 5-phosphate + NADPH + H(+). It participates in amino-acid biosynthesis; L-proline biosynthesis; L-glutamate 5-semialdehyde from L-glutamate: step 2/2. Functionally, catalyzes the NADPH-dependent reduction of L-glutamate 5-phosphate into L-glutamate 5-semialdehyde and phosphate. The product spontaneously undergoes cyclization to form 1-pyrroline-5-carboxylate. The protein is Gamma-glutamyl phosphate reductase of Escherichia coli O8 (strain IAI1).